A 212-amino-acid chain; its full sequence is Imidazole glycerol phosphate synthase subunit HisH 2 (212 aa).

The Glutamine amidotransferase type-1 domain occupies 4-211 (HLGLIDYGMG…LDWLQRGAPI (208 aa)). C82 (nucleophile) is an active-site residue. Catalysis depends on residues H186 and E188.

Heterodimer of HisH and HisF.

It is found in the cytoplasm. The enzyme catalyses 5-[(5-phospho-1-deoxy-D-ribulos-1-ylimino)methylamino]-1-(5-phospho-beta-D-ribosyl)imidazole-4-carboxamide + L-glutamine = D-erythro-1-(imidazol-4-yl)glycerol 3-phosphate + 5-amino-1-(5-phospho-beta-D-ribosyl)imidazole-4-carboxamide + L-glutamate + H(+). It carries out the reaction L-glutamine + H2O = L-glutamate + NH4(+). Its pathway is amino-acid biosynthesis; L-histidine biosynthesis; L-histidine from 5-phospho-alpha-D-ribose 1-diphosphate: step 5/9. Its function is as follows. IGPS catalyzes the conversion of PRFAR and glutamine to IGP, AICAR and glutamate. The HisH subunit provides the glutamine amidotransferase activity that produces the ammonia necessary to HisF for the synthesis of IGP and AICAR. This chain is Imidazole glycerol phosphate synthase subunit HisH 2 (hisH2), found in Parasynechococcus marenigrum (strain WH8102).